Here is a 211-residue protein sequence, read N- to C-terminus: ATP phosphoribosyltransferase (211 aa).

This sequence belongs to the ATP phosphoribosyltransferase family. Short subfamily. Heteromultimer composed of HisG and HisZ subunits.

The protein resides in the cytoplasm. The enzyme catalyses 1-(5-phospho-beta-D-ribosyl)-ATP + diphosphate = 5-phospho-alpha-D-ribose 1-diphosphate + ATP. The protein operates within amino-acid biosynthesis; L-histidine biosynthesis; L-histidine from 5-phospho-alpha-D-ribose 1-diphosphate: step 1/9. Its function is as follows. Catalyzes the condensation of ATP and 5-phosphoribose 1-diphosphate to form N'-(5'-phosphoribosyl)-ATP (PR-ATP). Has a crucial role in the pathway because the rate of histidine biosynthesis seems to be controlled primarily by regulation of HisG enzymatic activity. The sequence is that of ATP phosphoribosyltransferase from Pseudomonas savastanoi pv. phaseolicola (strain 1448A / Race 6) (Pseudomonas syringae pv. phaseolicola (strain 1448A / Race 6)).